A 156-amino-acid polypeptide reads, in one-letter code: dCTP deaminase (156 aa).

Residues 79–84 (RSTFAR), D95, Q124, and Y138 each bind dCTP.

Belongs to the dCTP deaminase family. As to quaternary structure, homotrimer.

The enzyme catalyses dCTP + H2O + H(+) = dUTP + NH4(+). It participates in pyrimidine metabolism; dUMP biosynthesis; dUMP from dCTP (dUTP route): step 1/2. Catalyzes the deamination of dCTP to dUTP. The polypeptide is dCTP deaminase (Thermococcus sibiricus (strain DSM 12597 / MM 739)).